We begin with the raw amino-acid sequence, 514 residues long: Acetylcholine receptor subunit gamma (514 aa).

The signal sequence occupies residues 1–22; the sequence is MRCSDLLLLFLLALCVLPGISC. Topologically, residues 23–241 are extracellular; sequence RNQEEKLLQD…VIFYLIIQRK (219 aa). An intrachain disulfide couples C150 to C164. Residue N163 is glycosylated (N-linked (GlcNAc...) asparagine). The next 3 membrane-spanning stretches (helical) occupy residues 242–266, 275–293, and 309–330; these read PLFYIINIIVPCVLISSMAVLVYFL, CTVSINVLLAQTVFLFLIA, and YLTFLMVVTVVIVVNAVIVLNV. Residues 331–473 are Cytoplasmic-facing; that stretch reads SLRTPNTHSM…WILVGRVIDR (143 aa). Y386 bears the Phosphotyrosine; by Tyr-kinases mark. Residues 474–494 traverse the membrane as a helical segment; it reads VCFFIMASLFVCGTIGIFLMA.

Belongs to the ligand-gated ion channel (TC 1.A.9) family. Acetylcholine receptor (TC 1.A.9.1) subfamily. Gamma/CHRNG sub-subfamily. As to quaternary structure, pentamer of two alpha chains, and one each of the beta, delta, and gamma chains.

The protein localises to the postsynaptic cell membrane. It is found in the cell membrane. The catalysed reaction is K(+)(in) = K(+)(out). The enzyme catalyses Na(+)(in) = Na(+)(out). In terms of biological role, after binding acetylcholine, the AChR responds by an extensive change in conformation that affects all subunits and leads to opening of an ion-conducting channel across the plasma membrane. The sequence is that of Acetylcholine receptor subunit gamma (CHRNG) from Gallus gallus (Chicken).